Reading from the N-terminus, the 395-residue chain is NAD(P)H-quinone oxidoreductase subunit H (395 aa).

The protein belongs to the complex I 49 kDa subunit family. As to quaternary structure, NDH-1 can be composed of about 15 different subunits; different subcomplexes with different compositions have been identified which probably have different functions.

Its subcellular location is the cellular thylakoid membrane. The catalysed reaction is a plastoquinone + NADH + (n+1) H(+)(in) = a plastoquinol + NAD(+) + n H(+)(out). The enzyme catalyses a plastoquinone + NADPH + (n+1) H(+)(in) = a plastoquinol + NADP(+) + n H(+)(out). In terms of biological role, NDH-1 shuttles electrons from an unknown electron donor, via FMN and iron-sulfur (Fe-S) centers, to quinones in the respiratory and/or the photosynthetic chain. The immediate electron acceptor for the enzyme in this species is believed to be plastoquinone. Couples the redox reaction to proton translocation, and thus conserves the redox energy in a proton gradient. Cyanobacterial NDH-1 also plays a role in inorganic carbon-concentration. The protein is NAD(P)H-quinone oxidoreductase subunit H of Prochlorococcus marinus subsp. pastoris (strain CCMP1986 / NIES-2087 / MED4).